The chain runs to 896 residues: Protein translocase subunit SecA (896 aa).

Residues glutamine 87, glycine 105–threonine 109, and aspartate 507 each bind ATP. The segment at glutamate 853–proline 879 is disordered. A compositionally biased stretch (basic and acidic residues) spans threonine 866 to arginine 876. Zn(2+) is bound by residues cysteine 880, cysteine 882, cysteine 891, and histidine 892.

Belongs to the SecA family. As to quaternary structure, monomer and homodimer. Part of the essential Sec protein translocation apparatus which comprises SecA, SecYEG and auxiliary proteins SecDF-YajC and YidC. The cofactor is Zn(2+).

It localises to the cell inner membrane. Its subcellular location is the cytoplasm. It carries out the reaction ATP + H2O + cellular proteinSide 1 = ADP + phosphate + cellular proteinSide 2.. Part of the Sec protein translocase complex. Interacts with the SecYEG preprotein conducting channel. Has a central role in coupling the hydrolysis of ATP to the transfer of proteins into and across the cell membrane, serving both as a receptor for the preprotein-SecB complex and as an ATP-driven molecular motor driving the stepwise translocation of polypeptide chains across the membrane. This Legionella pneumophila (strain Corby) protein is Protein translocase subunit SecA.